Here is a 254-residue protein sequence, read N- to C-terminus: N(G),N(G)-dimethylarginine dimethylaminohydrolase (254 aa).

Residues L18, D60, 65 to 66 (ED), R85, and R132 each bind substrate. H162 functions as the Proton donor in the catalytic mechanism. Zn(2+) is bound at residue H162. Residue I243 coordinates substrate. A Zn(2+)-binding site is contributed by C249. The active-site Nucleophile is C249.

The protein belongs to the DDAH family. In terms of assembly, homodimer.

It catalyses the reaction N(omega),N(omega)-dimethyl-L-arginine + H2O = dimethylamine + L-citrulline. The enzyme catalyses N(omega)-methyl-L-arginine + H2O = L-citrulline + methylamine. Its activity is regulated as follows. Inhibited by zinc ions. Competitively inhibited by lysine. Hydrolyzes N(G),N(G)-dimethyl-L-arginine (ADMA) and N(G)-monomethyl-L-arginine (MMA). The sequence is that of N(G),N(G)-dimethylarginine dimethylaminohydrolase from Pseudomonas aeruginosa (strain ATCC 15692 / DSM 22644 / CIP 104116 / JCM 14847 / LMG 12228 / 1C / PRS 101 / PAO1).